Consider the following 753-residue polypeptide: Putative cyclic nucleotide-gated ion channel 8 (753 aa).

Over 1-111 (MYKSQYISGH…DKTLLLWNRM (111 aa)) the chain is Cytoplasmic. The chain crosses the membrane as a helical span at residues 112–132 (FVISCILAVSVDPLFFYLPIV). The Extracellular portion of the chain corresponds to 133 to 145 (DNSKNCIGIDSKL). A helical transmembrane segment spans residues 146-166 (AVTTTTLRTIIDVFYLTRMAL). Residues 167–199 (QFRTAYIAPSSRVFGRGELVIDPAKIAERYLTR) lie on the Cytoplasmic side of the membrane. The chain crosses the membrane as a helical span at residues 200 to 220 (YFIVDFLAVLPLPQIAVWKFL). The Extracellular portion of the chain corresponds to 221-233 (HGSKGTDVLPTKQ). Residues 234–254 (ALLHIVITQYIPRFVRFIPLT) traverse the membrane as a helical segment. The Cytoplasmic portion of the chain corresponds to 255–274 (SELKKTAGAFAEGAWAGAAY). The chain crosses the membrane as a helical span at residues 275 to 295 (YLLWYMLASHITGAFWYMLSV). The Extracellular segment spans residues 296–402 (ERNDTCLRSA…QGLQTSTYPG (107 aa)). A helical membrane pass occupies residues 403 to 423 (EVLFSIAIAVAGLLLFALLIG). The Cytoplasmic portion of the chain corresponds to 424–753 (NMQTYLQSLT…FEALDTDDLN (330 aa)). A nucleoside 3',5'-cyclic phosphate is bound by residues 508–638 (LFAN…TFRF) and Glu579. The segment at 624–639 (FRRLHSRQVQQTFRFY) is calmodulin-binding. Positions 644–673 (RTWAACFIQAAWRRHLRRKIAELRRKEEEE) constitute an IQ domain. The tract at residues 731-753 (KSLMNLTKPSEPDFEALDTDDLN) is disordered. A compositionally biased stretch (acidic residues) spans 742-753 (PDFEALDTDDLN).

Belongs to the cyclic nucleotide-gated cation channel (TC 1.A.1.5) family. As to quaternary structure, homotetramer or heterotetramer.

The protein resides in the cell membrane. Functionally, putative cyclic nucleotide-gated ion channel. The polypeptide is Putative cyclic nucleotide-gated ion channel 8 (CNGC8) (Arabidopsis thaliana (Mouse-ear cress)).